The sequence spans 128 residues: Transcription antitermination protein NusB (128 aa).

The protein belongs to the NusB family.

Functionally, involved in transcription antitermination. Required for transcription of ribosomal RNA (rRNA) genes. Binds specifically to the boxA antiterminator sequence of the ribosomal RNA (rrn) operons. The sequence is that of Transcription antitermination protein NusB from Listeria monocytogenes serotype 4b (strain CLIP80459).